The following is a 445-amino-acid chain: Lipoyl synthase, mitochondrial (445 aa).

The N-terminal 40 residues, 1-40 (MRPGSWRVITHYGFTGPIQRLQAPLRRSLARAAALSTRSY), are a transit peptide targeting the mitochondrion. A compositionally biased stretch (low complexity) spans 42–71 (TIPSAPSSQPTSQESSPAASASASASAPAT). The segment at 42–77 (TIPSAPSSQPTSQESSPAASASASASAPATKPRPTY) is disordered. [4Fe-4S] cluster is bound by residues cysteine 157, cysteine 162, cysteine 168, cysteine 188, cysteine 192, cysteine 195, and serine 405. In terms of domain architecture, Radical SAM core spans 171-394 (GSNKAAATAT…RQRALDMGFL (224 aa)).

It belongs to the radical SAM superfamily. Lipoyl synthase family. [4Fe-4S] cluster is required as a cofactor.

Its subcellular location is the mitochondrion. The enzyme catalyses [[Fe-S] cluster scaffold protein carrying a second [4Fe-4S](2+) cluster] + N(6)-octanoyl-L-lysyl-[protein] + 2 oxidized [2Fe-2S]-[ferredoxin] + 2 S-adenosyl-L-methionine + 4 H(+) = [[Fe-S] cluster scaffold protein] + N(6)-[(R)-dihydrolipoyl]-L-lysyl-[protein] + 4 Fe(3+) + 2 hydrogen sulfide + 2 5'-deoxyadenosine + 2 L-methionine + 2 reduced [2Fe-2S]-[ferredoxin]. Its pathway is protein modification; protein lipoylation via endogenous pathway; protein N(6)-(lipoyl)lysine from octanoyl-[acyl-carrier-protein]: step 2/2. Functionally, catalyzes the radical-mediated insertion of two sulfur atoms into the C-6 and C-8 positions of the octanoyl moiety bound to the lipoyl domains of lipoate-dependent enzymes, thereby converting the octanoylated domains into lipoylated derivatives. This Sordaria macrospora (strain ATCC MYA-333 / DSM 997 / K(L3346) / K-hell) protein is Lipoyl synthase, mitochondrial.